The primary structure comprises 347 residues: Putative [LysW]-L-2-aminoadipate/[LysW]-L-glutamate phosphate reductase (347 aa).

9-12 (SGYI) is an NADP(+) binding site. Cys149 is an active-site residue. Asn314 provides a ligand contact to NADP(+).

Belongs to the NAGSA dehydrogenase family. Type 1 subfamily. LysY sub-subfamily.

It localises to the cytoplasm. It carries out the reaction [amino-group carrier protein]-C-terminal-N-(1-carboxy-5-oxopentan-1-yl)-L-glutamine + phosphate + NADP(+) = [amino-group carrier protein]-C-terminal-N-(1-carboxy-5-phosphooxy-5-oxopentan-1-yl)-L-glutamine + NADPH + H(+). The enzyme catalyses [amino-group carrier protein]-C-terminal-gamma-(L-glutamyl-5-semialdehyde)-L-glutamate + phosphate + NADP(+) = [amino-group carrier protein]-C-terminal-gamma-(5-phospho-L-glutamyl)-L-glutamate + NADPH + H(+). It functions in the pathway amino-acid biosynthesis; L-lysine biosynthesis via AAA pathway; L-lysine from L-alpha-aminoadipate (Thermus route): step 3/5. Its pathway is amino-acid biosynthesis; L-arginine biosynthesis. Functionally, involved in both the arginine and lysine biosynthetic pathways. The chain is Putative [LysW]-L-2-aminoadipate/[LysW]-L-glutamate phosphate reductase from Picrophilus torridus (strain ATCC 700027 / DSM 9790 / JCM 10055 / NBRC 100828 / KAW 2/3).